The primary structure comprises 172 residues: Small ribosomal subunit protein uS5 (172 aa).

An S5 DRBM domain is found at 17–80 (LREKMISVNR…DEARRKMVKV (64 aa)).

This sequence belongs to the universal ribosomal protein uS5 family. In terms of assembly, part of the 30S ribosomal subunit. Contacts proteins S4 and S8.

Functionally, with S4 and S12 plays an important role in translational accuracy. Located at the back of the 30S subunit body where it stabilizes the conformation of the head with respect to the body. The chain is Small ribosomal subunit protein uS5 from Cupriavidus metallidurans (strain ATCC 43123 / DSM 2839 / NBRC 102507 / CH34) (Ralstonia metallidurans).